The following is a 563-amino-acid chain: AP-1-like transcription factor yap1 (563 aa).

A disordered region spans residues 23–179 (LAALSSNQPP…AFRERKEKHL (157 aa)). The Bipartite nuclear localization signal motif lies at 35-42 (QQNDKQRS). Basic and acidic residues predominate over residues 36–48 (QNDKQRSQAKTDP). Residues 52–67 (PGNMSSGSFSMSPGFN) are compositionally biased toward low complexity. The Bipartite nuclear localization signal signature appears at 68–75 (KTHPGSGG). Residues 79 to 94 (GDDESPFLDFNPELDF) are compositionally biased toward acidic residues. 2 stretches are compositionally biased toward basic and acidic residues: residues 112-144 (SEEH…DKAA) and 170-179 (AFRERKEKHL). Residues 154–217 (SEPTSKRKAQ…ERLQVELREY (64 aa)) enclose the bZIP domain. The segment at 159 to 180 (KRKAQNRAAQRAFRERKEKHLK) is basic motif. The interval 182 to 189 (LETKVDEL) is leucine-zipper. A transcription activation 1 region spans residues 211-332 (QVELREYRKR…PSPKVPSVYN (122 aa)). Disordered stretches follow at residues 267–380 (IFNG…KLND) and 394–420 (DAVR…TPGP). The segment at 284 to 296 (SSPATSDSQVPGV) is n-CRD. Positions 300–309 (ETLNGSNNRG) are enriched in polar residues. The segment covering 336-362 (SASSHDSSNSCSPSSSSDSHQSQMLSS) has biased composition (low complexity). Polar residues-rich tracts occupy residues 363–380 (NGTS…KLND) and 401–416 (ESVS…NYEQ). A transcription activation 2 region spans residues 377-459 (KLNDSVQNHH…SQDFGTFFDD (83 aa)). 3 cysteine pairs are disulfide-bonded: cysteine 510–cysteine 534, cysteine 510–cysteine 543, and cysteine 534–cysteine 543. Positions 510–543 (CTKIWDRLQSMEKFRNGEIDVDNLCSELRTKARC) are c-CRD. The Nuclear export signal signature appears at 528 to 535 (IDVDNLCS).

This sequence belongs to the bZIP family. YAP subfamily. In terms of processing, depending on the oxidative stress inducing agent, yap1 can undergo two distinct conformational changes, both involving disulfide bond formation, and both masking the nuclear export signal, thus abolishing nuclear export.

Its subcellular location is the nucleus. It localises to the cytoplasm. In terms of biological role, transcription activator involved in oxidative stress response and redox homeostasis. Regulates the transcription of genes encoding antioxidant enzymes and components of the cellular thiol-reducing pathways. The sequence is that of AP-1-like transcription factor yap1 from Aspergillus oryzae (strain ATCC 42149 / RIB 40) (Yellow koji mold).